We begin with the raw amino-acid sequence, 514 residues long: Extracellular exo-inulinase (514 aa).

An N-terminal signal peptide occupies residues 1–18 (MRAFLALIFLTFVMNVES). Substrate-binding positions include 33–34 (ND) and Gln-52. The Nucleophile role is filled by Asp-34. Asn-56 carries an N-linked (GlcNAc...) asparagine glycan. Substrate is bound by residues Trp-60 and Ser-95. 2 N-linked (GlcNAc...) asparagine glycosylation sites follow: Asn-104 and Asn-110. Position 162–163 (162–163 (RD)) interacts with substrate. Asn-197 and Asn-203 each carry an N-linked (GlcNAc...) asparagine glycan. The substrate site is built by Glu-214 and Trp-300. Glu-214 acts as the Proton donor/acceptor in catalysis. 4 N-linked (GlcNAc...) asparagine glycosylation sites follow: Asn-357, Asn-371, Asn-389, and Asn-422.

It belongs to the glycosyl hydrolase 32 family.

Its subcellular location is the secreted. It catalyses the reaction Hydrolysis of terminal, non-reducing (2-&gt;1)- and (2-&gt;6)-linked beta-D-fructofuranose residues in fructans.. Exo-inulinase involved in utilization of the plant storage polymer inulin, consisting of fructooligosaccharides with a degree of polymerization (DP) value from 2 to 60. Splits off terminal fructose units successively from the non-reducing end of the inulin molecule. In Meyerozyma guilliermondii (strain ATCC 6260 / CBS 566 / DSM 6381 / JCM 1539 / NBRC 10279 / NRRL Y-324) (Yeast), this protein is Extracellular exo-inulinase.